The sequence spans 488 residues: Probable apyrase 5 (488 aa).

The disordered stretch occupies residues Met1 to Lys26. Residues Met1–Lys32 lie on the Cytoplasmic side of the membrane. A compositionally biased stretch (polar residues) spans Pro10–Met21. The helical; Signal-anchor for type II membrane protein transmembrane segment at Ser33 to Ser53 threads the bilayer. At Ser54–Lys488 the chain is on the extracellular side. Residue Val73–Arg83 coordinates ATP. Catalysis depends on Glu196, which acts as the Proton acceptor. Gly220–Gln230 lines the ATP pocket. Asn251 carries N-linked (GlcNAc...) asparagine glycosylation.

Belongs to the GDA1/CD39 NTPase family. Ca(2+) is required as a cofactor. As to expression, highly expressed in young rosette leaves but only weakly in roots.

Its subcellular location is the membrane. The enzyme catalyses a ribonucleoside 5'-triphosphate + 2 H2O = a ribonucleoside 5'-phosphate + 2 phosphate + 2 H(+). Functionally, catalyzes the hydrolysis of phosphoanhydride bonds of nucleoside tri- and di-phosphates. The sequence is that of Probable apyrase 5 (APY5) from Arabidopsis thaliana (Mouse-ear cress).